The primary structure comprises 540 residues: uncharacterized protein (540 aa).

An N-terminal signal peptide occupies residues 1–20 (MSVSYRGPRWSSFVHVSQHS).

Belongs to the TP096X family.

This is an uncharacterized protein from Treponema pallidum (strain Nichols).